A 565-amino-acid polypeptide reads, in one-letter code: Nephronectin (565 aa).

The first 19 residues, 1-19, serve as a signal peptide directing secretion; the sequence is MDFLLALVLVSSLYLQAAA. One can recognise an EGF-like 1 domain in the interval 52 to 87; sequence SWGQCQPVCQPRCKHGECIGPNKCKCHPGYAGKTCN. Cystine bridges form between cysteine 56/cysteine 69, cysteine 60/cysteine 75, cysteine 77/cysteine 86, cysteine 93/cysteine 104, cysteine 100/cysteine 113, and cysteine 115/cysteine 127. In terms of domain architecture, EGF-like 2; calcium-binding spans 89–128; that stretch reads DLNECGLKPRPCKHRCMNTYGSYKCYCLNGYMLMPDGSCS. The 37-residue stretch at 132–168 folds into the EGF-like 3 domain; sequence TCSMANCQYGCDVVKGQIRCQCPSPGLQLAPDGRTCV. Positions 169-213 constitute an EGF-like 4; calcium-binding domain; the sequence is DVDECATGRASCPRFRQCVNTFGSYICKCHKGFDLMYIGGKYQCH. 6 disulfides stabilise this stretch: cysteine 173/cysteine 186, cysteine 180/cysteine 195, cysteine 197/cysteine 212, cysteine 218/cysteine 231, cysteine 225/cysteine 240, and cysteine 242/cysteine 253. The EGF-like 5; calcium-binding domain maps to 214–254; it reads DIDECSLGQYQCSSFARCYNIRGSYKCKCKEGYQGDGLTCV. A disordered region spans residues 301–389; that stretch reads YIPPIITNRP…KPRGDVFIPR (89 aa). A compositionally biased stretch (low complexity) spans 304–316; it reads PIITNRPTSKPTT. Residues 317-347 show a composition bias toward pro residues; it reads RPTPKPTPIPTPPPPPPLPTELRTPLPPTTP. Positions 382-384 match the Integrin interaction motif; sequence RGD. Positions 420–563 constitute an MAM domain; it reads HSCNFDHGLC…VSLKKGHCSE (144 aa).

The protein belongs to the nephronectin family. Homodimer and homotrimer. In terms of tissue distribution, expressed in kidney and lung and to a lower extent in brain, pregnant uterus, placenta, thyroid gland and blood vessels.

It is found in the secreted. The protein resides in the extracellular space. It localises to the extracellular matrix. Functional ligand of integrin alpha-8/beta-1 in kidney development. Regulates the expression of GDNF with integrin alpha-8/beta-1 which is essential for kidney development. May also play a role in the development and function of various tissues, regulating cell adhesion, spreading and survival through the binding of several integrins. The chain is Nephronectin (NPNT) from Homo sapiens (Human).